Reading from the N-terminus, the 222-residue chain is Small ribosomal subunit protein uS3 (222 aa).

Positions 39–109 constitute a KH type-2 domain; sequence IRNFVKKKVY…NILINIVEVK (71 aa).

This sequence belongs to the universal ribosomal protein uS3 family. Part of the 30S ribosomal subunit. Forms a tight complex with proteins S10 and S14.

In terms of biological role, binds the lower part of the 30S subunit head. Binds mRNA in the 70S ribosome, positioning it for translation. This chain is Small ribosomal subunit protein uS3, found in Clostridium tetani (strain Massachusetts / E88).